The sequence spans 137 residues: Small ribosomal subunit protein uS12 (137 aa).

This sequence belongs to the universal ribosomal protein uS12 family. Part of the 30S ribosomal subunit. Contacts proteins S8 and S17. May interact with IF1 in the 30S initiation complex.

In terms of biological role, with S4 and S5 plays an important role in translational accuracy. Functionally, interacts with and stabilizes bases of the 16S rRNA that are involved in tRNA selection in the A site and with the mRNA backbone. Located at the interface of the 30S and 50S subunits, it traverses the body of the 30S subunit contacting proteins on the other side and probably holding the rRNA structure together. The combined cluster of proteins S8, S12 and S17 appears to hold together the shoulder and platform of the 30S subunit. The polypeptide is Small ribosomal subunit protein uS12 (Lactiplantibacillus plantarum (strain ATCC BAA-793 / NCIMB 8826 / WCFS1) (Lactobacillus plantarum)).